The primary structure comprises 738 residues: uncharacterized protein (738 aa).

Polar residues predominate over residues 1–10 (MQKKVVQSAS). Disordered regions lie at residues 1–23 (MQKKVVQSASKNEELDPHYKRSS), 53–83 (EGTHSASVHPSTSSTSHISSPSAFSVQNPNP), and 219–266 (HQDG…PLST). Over residues 55–77 (THSASVHPSTSSTSHISSPSAFS) the composition is skewed to low complexity. The span at 246–266 (GSPSPNRSLNVSNNTTPPLST) shows a compositional bias: polar residues. 2 positions are modified to phosphothreonine: threonine 260 and threonine 261. The segment at residues 292–318 (CAKCQKDNKKCDDARPCQRCIKAKTDC) is a DNA-binding region (zn(2)-C6 fungal-type). Positions 323–335 (RKKRPTGVRRGPY) are enriched in basic residues. Disordered regions lie at residues 323 to 372 (RKKR…SDNQ) and 441 to 464 (DETGTSSAGSKPFNRKSRNRSFTN). A compositionally biased stretch (low complexity) spans 340–352 (DTSNNTKSTTASS). The segment covering 353–372 (GHSTQDSLSSKMLDPSSDNQ) has biased composition (polar residues).

Its subcellular location is the cytoplasm. It localises to the nucleus. This is an uncharacterized protein from Schizosaccharomyces pombe (strain 972 / ATCC 24843) (Fission yeast).